We begin with the raw amino-acid sequence, 301 residues long: Putative S-adenosyl-L-methionine-dependent methyltransferase MT0851 (301 aa).

S-adenosyl-L-methionine contacts are provided by residues D127 and 156-157; that span reads DL.

It belongs to the UPF0677 family.

In terms of biological role, exhibits S-adenosyl-L-methionine-dependent methyltransferase activity. The protein is Putative S-adenosyl-L-methionine-dependent methyltransferase MT0851 of Mycobacterium tuberculosis (strain CDC 1551 / Oshkosh).